The sequence spans 365 residues: Forkhead box protein H1 (365 aa).

The segment at 1–29 (MGPCSGSRLGPPEAESPSQPPKRRKKRYL) is disordered. The segment at residues 32-128 (DKPPYTYLAM…ALRLQNTALC (97 aa)) is a DNA-binding region (fork-head). Residues 151–215 (GRPYRPPSPP…TPPLPSSERP (65 aa)) are disordered. The segment covering 154 to 164 (YRPPSPPPPPS) has biased composition (pro residues). The tract at residues 273–354 (LWGQLPTSYL…VSHPRDLAAP (82 aa)) is SMAD-interaction domain (SID). The Fast/FoxH1 motif 1 (FM1) signature appears at 277–281 (LPTSY). Residues 287–293 (PNVVMPL) carry the Fast/FoxH1 motif 2 (FM2) motif. The SMAD interaction motif (SIM) motif lies at 327 to 348 (LDALFQGVPPNKSIYDVWVSHP).

Interacts with the MH2 domains of SMAD2 and SMAD3. As to expression, ubiquitous.

Its subcellular location is the nucleus. Functionally, transcriptional activator. Recognizes and binds to the DNA sequence 5'-TGT[GT][GT]ATT-3'. Required for induction of the goosecoid (GSC) promoter by TGF-beta or activin signaling. Forms a transcriptionally active complex containing FOXH1/SMAD2/SMAD4 on a site on the GSC promoter called TARE (TGF-beta/activin response element). This is Forkhead box protein H1 (FOXH1) from Homo sapiens (Human).